The chain runs to 412 residues: DNA replication and repair protein RecF (412 aa).

30–37 serves as a coordination point for ATP; that stretch reads GANGAGKT. The tract at residues 369 to 412 is disordered; the sequence is LQVRPGGGTAAVTPDPEYARGEATAANGAASAPTGADAASTSRD. The span at 389–412 shows a compositional bias: low complexity; sequence GEATAANGAASAPTGADAASTSRD.

This sequence belongs to the RecF family.

The protein localises to the cytoplasm. In terms of biological role, the RecF protein is involved in DNA metabolism; it is required for DNA replication and normal SOS inducibility. RecF binds preferentially to single-stranded, linear DNA. It also seems to bind ATP. This is DNA replication and repair protein RecF from Salinibacter ruber (strain DSM 13855 / M31).